Reading from the N-terminus, the 360-residue chain is GTPase Obg (360 aa).

Residues Met1–Ile156 enclose the Obg domain. One can recognise an OBG-type G domain in the interval Ala157–Pro360. Residues Gly163–Ser170, Phe188–Val192, Asp210–Gly213, Asn279–Asp282, and Ser341–Val343 contribute to the GTP site. Ser170 and Thr190 together coordinate Mg(2+).

Belongs to the TRAFAC class OBG-HflX-like GTPase superfamily. OBG GTPase family. Monomer. The cofactor is Mg(2+).

It localises to the cytoplasm. Its function is as follows. An essential GTPase which binds GTP, GDP and possibly (p)ppGpp with moderate affinity, with high nucleotide exchange rates and a fairly low GTP hydrolysis rate. Plays a role in control of the cell cycle, stress response, ribosome biogenesis and in those bacteria that undergo differentiation, in morphogenesis control. This Helicobacter pylori (strain HPAG1) protein is GTPase Obg.